Consider the following 207-residue polypeptide: Small ribosomal subunit protein uS4c (207 aa).

In terms of domain architecture, S4 RNA-binding spans 92-153; the sequence is MRLDNILFRL…PKIYQSIITK (62 aa).

The protein belongs to the universal ribosomal protein uS4 family. Part of the 30S ribosomal subunit. Contacts protein S5. The interaction surface between S4 and S5 is involved in control of translational fidelity.

It localises to the plastid. Its subcellular location is the chloroplast. In terms of biological role, one of the primary rRNA binding proteins, it binds directly to 16S rRNA where it nucleates assembly of the body of the 30S subunit. Functionally, with S5 and S12 plays an important role in translational accuracy. This Equisetum bogotense (Horsetail) protein is Small ribosomal subunit protein uS4c (rps4).